Here is a 677-residue protein sequence, read N- to C-terminus: Methionine--tRNA ligase (677 aa).

The short motif at 15–25 (PYANGSIHLGH) is the 'HIGH' region element. Zn(2+)-binding residues include cysteine 146, cysteine 149, cysteine 159, and cysteine 162. The 'KMSKS' region signature appears at 333–337 (KMSKS). Position 336 (lysine 336) interacts with ATP. A tRNA-binding domain is found at 575-677 (DFAKVDLRVA…DGAKPGQQVK (103 aa)).

Belongs to the class-I aminoacyl-tRNA synthetase family. MetG type 1 subfamily. Homodimer. Zn(2+) is required as a cofactor.

It is found in the cytoplasm. The catalysed reaction is tRNA(Met) + L-methionine + ATP = L-methionyl-tRNA(Met) + AMP + diphosphate. Functionally, is required not only for elongation of protein synthesis but also for the initiation of all mRNA translation through initiator tRNA(fMet) aminoacylation. This chain is Methionine--tRNA ligase, found in Citrobacter koseri (strain ATCC BAA-895 / CDC 4225-83 / SGSC4696).